Reading from the N-terminus, the 298-residue chain is N-acetylmuramic acid 6-phosphate etherase (298 aa).

One can recognise an SIS domain in the interval 54–217 (TIKAMKQGGR…STTVMIGLGK (164 aa)). Glutamate 82 serves as the catalytic Proton donor. Glutamate 113 is an active-site residue.

The protein belongs to the GCKR-like family. MurNAc-6-P etherase subfamily. As to quaternary structure, homodimer.

It catalyses the reaction N-acetyl-D-muramate 6-phosphate + H2O = N-acetyl-D-glucosamine 6-phosphate + (R)-lactate. The protein operates within amino-sugar metabolism; N-acetylmuramate degradation. Its function is as follows. Specifically catalyzes the cleavage of the D-lactyl ether substituent of MurNAc 6-phosphate, producing GlcNAc 6-phosphate and D-lactate. In Halalkalibacterium halodurans (strain ATCC BAA-125 / DSM 18197 / FERM 7344 / JCM 9153 / C-125) (Bacillus halodurans), this protein is N-acetylmuramic acid 6-phosphate etherase.